Consider the following 484-residue polypeptide: E-selectin (484 aa).

Positions 1 to 22 are cleaved as a signal peptide; it reads MIASQFLSALPLVLLLLRESGA. The region spanning 23–140 is the C-type lectin domain; sequence WSYSASTETM…CSKKKLALCY (118 aa). Topologically, residues 23–429 are extracellular; that stretch reads WSYSASTETM…CEAPAESKIP (407 aa). 14 disulfide bridges follow: Cys41–Cys139, Cys112–Cys131, Cys144–Cys155, Cys149–Cys164, Cys166–Cys175, Cys181–Cys222, Cys194–Cys204, Cys208–Cys235, Cys240–Cys285, Cys271–Cys298, Cys303–Cys348, Cys334–Cys361, Cys366–Cys407, and Cys393–Cys420. N-linked (GlcNAc...) asparagine glycans are attached at residues Asn61, Asn65, and Asn79. Glu102, Asn104, and Glu110 together coordinate Ca(2+). A carbohydrate is bound by residues 102–110, 114–119, and 127–129; these read EPNNKQSNE, EIYIKR, and NDE. Positions 127 and 128 each coordinate Ca(2+). An EGF-like domain is found at 141-176; that stretch reads TAACTPTSCSGHGECIETINSSTCQCYPGFRGLQCE. Asn160 is a glycosylation site (N-linked (GlcNAc...) asparagine). Sushi domains lie at 179–237, 251–300, 301–363, and 364–422; these read VECD…TCKA, VSCN…VCKA, VKCP…SCQV, and VQCS…TCEA. Asn201 is a glycosylation site (N-linked (GlcNAc...) asparagine). Asn254 carries N-linked (GlcNAc...) asparagine glycosylation. 2 N-linked (GlcNAc...) asparagine glycosylation sites follow: Asn376 and Asn400. The chain crosses the membrane as a helical span at residues 430–451; that stretch reads LAMGLAAGGVSFMTSASFLLWL. Topologically, residues 452 to 484 are cytoplasmic; sequence LKRLRKRAKKFVPSSSSECLQPNGSYQMPSDLI.

This sequence belongs to the selectin/LECAM family. Interacts with SELPLG/PSGL1 and PODXL2 through the sialyl Lewis X epitope. SELPLG sulfation appears not to be required for this interaction.

It is found in the cell membrane. In terms of biological role, cell-surface glycoprotein having a role in immunoadhesion. Mediates in the adhesion of blood neutrophils in cytokine-activated endothelium through interaction with SELPLG/PSGL1. May have a role in capillary morphogenesis. The polypeptide is E-selectin (SELE) (Sus scrofa (Pig)).